The chain runs to 227 residues: Cytochrome c oxidase subunit 2 (227 aa).

Residues 1–14 (MAHPFQTGLQDATS) are Mitochondrial intermembrane-facing. Residues 15–45 (PIMEELLHFHDHTLMIVFLISSLVLYIISIM) form a helical membrane-spanning segment. Residues 46–59 (LTTKLTHTNTMDAQ) are Mitochondrial matrix-facing. A helical transmembrane segment spans residues 60–87 (EVETVWTILPAIILIMIALPSLRILYMM). At 88–227 (DEINNPSLTV…YFEKWSASML (140 aa)) the chain is on the mitochondrial intermembrane side. Cu cation contacts are provided by histidine 161, cysteine 196, glutamate 198, cysteine 200, histidine 204, and methionine 207. Mg(2+) is bound at residue glutamate 198. A Phosphotyrosine modification is found at tyrosine 218.

This sequence belongs to the cytochrome c oxidase subunit 2 family. Component of the cytochrome c oxidase (complex IV, CIV), a multisubunit enzyme composed of 14 subunits. The complex is composed of a catalytic core of 3 subunits MT-CO1, MT-CO2 and MT-CO3, encoded in the mitochondrial DNA, and 11 supernumerary subunits COX4I, COX5A, COX5B, COX6A, COX6B, COX6C, COX7A, COX7B, COX7C, COX8 and NDUFA4, which are encoded in the nuclear genome. The complex exists as a monomer or a dimer and forms supercomplexes (SCs) in the inner mitochondrial membrane with NADH-ubiquinone oxidoreductase (complex I, CI) and ubiquinol-cytochrome c oxidoreductase (cytochrome b-c1 complex, complex III, CIII), resulting in different assemblies (supercomplex SCI(1)III(2)IV(1) and megacomplex MCI(2)III(2)IV(2)). Found in a complex with TMEM177, COA6, COX18, COX20, SCO1 and SCO2. Interacts with TMEM177 in a COX20-dependent manner. Interacts with COX20. Interacts with COX16. Cu cation is required as a cofactor.

The protein resides in the mitochondrion inner membrane. It carries out the reaction 4 Fe(II)-[cytochrome c] + O2 + 8 H(+)(in) = 4 Fe(III)-[cytochrome c] + 2 H2O + 4 H(+)(out). In terms of biological role, component of the cytochrome c oxidase, the last enzyme in the mitochondrial electron transport chain which drives oxidative phosphorylation. The respiratory chain contains 3 multisubunit complexes succinate dehydrogenase (complex II, CII), ubiquinol-cytochrome c oxidoreductase (cytochrome b-c1 complex, complex III, CIII) and cytochrome c oxidase (complex IV, CIV), that cooperate to transfer electrons derived from NADH and succinate to molecular oxygen, creating an electrochemical gradient over the inner membrane that drives transmembrane transport and the ATP synthase. Cytochrome c oxidase is the component of the respiratory chain that catalyzes the reduction of oxygen to water. Electrons originating from reduced cytochrome c in the intermembrane space (IMS) are transferred via the dinuclear copper A center (CU(A)) of subunit 2 and heme A of subunit 1 to the active site in subunit 1, a binuclear center (BNC) formed by heme A3 and copper B (CU(B)). The BNC reduces molecular oxygen to 2 water molecules using 4 electrons from cytochrome c in the IMS and 4 protons from the mitochondrial matrix. The chain is Cytochrome c oxidase subunit 2 (MT-CO2) from Ailuropoda melanoleuca (Giant panda).